Here is a 772-residue protein sequence, read N- to C-terminus: U3 small nucleolar RNA-associated protein 25 homolog (772 aa).

A disordered region spans residues M1 to E179. Promotes p53/TP53 degradation regions lie at residues M1–P201 and V589–E651. S10 is modified (phosphoserine). The span at R25–K43 shows a compositional bias: basic and acidic residues. S52, S60, and S64 each carry phosphoserine. Positions D54–S70 are enriched in basic and acidic residues. Acidic residues predominate over residues E84–S124. Positions G127 to E136 are enriched in low complexity. Over residues S169–E179 the composition is skewed to basic and acidic residues. The segment at L652–Y713 is represses p53/TP53 degradation.

This sequence belongs to the UTP25 family. As to quaternary structure, interacts with CAPN3; the interaction is required for CAPN3 translocation to the nucleolus. Phosphorylated. Phosphorylation is required to promote p53/TP53 degradation in the nucleolus which promotes cell cycle progression and liver development. Expressed in all tissues tested: brain, small intestine, large intestine, stomach, liver, spleen, thymus, lung, kidney and testes (at protein level).

The protein localises to the nucleus. It is found in the nucleolus. In terms of biological role, component of the ribosomal small subunit processome for the biogenesis of ribosomes, functions in pre-ribosomal RNA (pre-rRNA) processing. Essential for embryonic development in part through the regulation of p53 pathway. Controls the expansion growth of digestive organs and liver. Also involved in the sympathetic neuronal development. Mediates, with CAPN3, the proteasome-independent degradation of p53/TP53. This is U3 small nucleolar RNA-associated protein 25 homolog from Mus musculus (Mouse).